The following is a 469-amino-acid chain: Cysteine--tRNA ligase (469 aa).

Position 29 (C29) interacts with Zn(2+). The 'HIGH' region signature appears at 31–41 (PTVYNYIHIGN). Zn(2+) is bound by residues C210, H235, and E239. The 'KMSKS' region motif lies at 267–271 (KMSKS). An ATP-binding site is contributed by K270.

This sequence belongs to the class-I aminoacyl-tRNA synthetase family. In terms of assembly, monomer. The cofactor is Zn(2+).

It localises to the cytoplasm. The enzyme catalyses tRNA(Cys) + L-cysteine + ATP = L-cysteinyl-tRNA(Cys) + AMP + diphosphate. The polypeptide is Cysteine--tRNA ligase (Thermosipho melanesiensis (strain DSM 12029 / CIP 104789 / BI429)).